The chain runs to 405 residues: Probable tRNA sulfurtransferase (405 aa).

The region spanning 60–165 (DQVMARLSQV…REAIYLSTKT (106 aa)) is the THUMP domain. ATP is bound by residues 183–184 (ML), 208–209 (HF), Arg265, Gly287, and Gln296.

Belongs to the ThiI family.

It localises to the cytoplasm. The enzyme catalyses [ThiI sulfur-carrier protein]-S-sulfanyl-L-cysteine + a uridine in tRNA + 2 reduced [2Fe-2S]-[ferredoxin] + ATP + H(+) = [ThiI sulfur-carrier protein]-L-cysteine + a 4-thiouridine in tRNA + 2 oxidized [2Fe-2S]-[ferredoxin] + AMP + diphosphate. It carries out the reaction [ThiS sulfur-carrier protein]-C-terminal Gly-Gly-AMP + S-sulfanyl-L-cysteinyl-[cysteine desulfurase] + AH2 = [ThiS sulfur-carrier protein]-C-terminal-Gly-aminoethanethioate + L-cysteinyl-[cysteine desulfurase] + A + AMP + 2 H(+). It functions in the pathway cofactor biosynthesis; thiamine diphosphate biosynthesis. Catalyzes the ATP-dependent transfer of a sulfur to tRNA to produce 4-thiouridine in position 8 of tRNAs, which functions as a near-UV photosensor. Also catalyzes the transfer of sulfur to the sulfur carrier protein ThiS, forming ThiS-thiocarboxylate. This is a step in the synthesis of thiazole, in the thiamine biosynthesis pathway. The sulfur is donated as persulfide by IscS. The protein is Probable tRNA sulfurtransferase of Lacticaseibacillus casei (strain BL23) (Lactobacillus casei).